The chain runs to 455 residues: uncharacterized protein (455 aa).

Positions 1 to 24 (MKTTKILLHTGVLALSLLATQVMA) are cleaved as a signal peptide.

This is an uncharacterized protein from Pseudomonas aeruginosa (strain ATCC 15692 / DSM 22644 / CIP 104116 / JCM 14847 / LMG 12228 / 1C / PRS 101 / PAO1).